Consider the following 304-residue polypeptide: MKKALIAIGLILGTITVAIIGYGIYLYSSIQNTAGEMHEPLDRGDKSDKRDVAFDISAQDPFSILIAGVDSREDTHAGRSDTLIVLTVNPKEESIKMLSIPRDTRTEIVGRGTDDKINHAYAFGGAQMTIDTVENFLDIPIDHYVSINMDGFTQLVDALGGVSVENSFAFSQNGYQFEEGEIFLETGDEALAYARMRKQDSRGDFGRNDRQRQIVEAVIKQSAQFSSITKAGAILDAVGESVRTDLQLDGMWELQSNYRGAAKNIEQLEITGEGTRINNIYYLIIPQEEIARVQGELKSHLELS.

Residues methionine 1–lysine 3 lie on the Cytoplasmic side of the membrane. Residues alanine 4–isoleucine 24 form a helical; Signal-anchor for type II membrane protein membrane-spanning segment. Residues tyrosine 25–serine 304 are Extracellular-facing.

This sequence belongs to the LytR/CpsA/Psr (LCP) family.

Its subcellular location is the cell membrane. It participates in cell wall biogenesis. Its function is as follows. May catalyze the final step in cell wall teichoic acid biosynthesis, the transfer of the anionic cell wall polymers (APs) from their lipid-linked precursor to the cell wall peptidoglycan (PG). The polypeptide is Polyisoprenyl-teichoic acid--peptidoglycan teichoic acid transferase TagU (Halalkalibacterium halodurans (strain ATCC BAA-125 / DSM 18197 / FERM 7344 / JCM 9153 / C-125) (Bacillus halodurans)).